A 513-amino-acid polypeptide reads, in one-letter code: ATP synthase subunit alpha (513 aa).

Residue 169 to 176 (GDRQTGKT) participates in ATP binding.

Belongs to the ATPase alpha/beta chains family. In terms of assembly, F-type ATPases have 2 components, CF(1) - the catalytic core - and CF(0) - the membrane proton channel. CF(1) has five subunits: alpha(3), beta(3), gamma(1), delta(1), epsilon(1). CF(0) has three main subunits: a(1), b(2) and c(9-12). The alpha and beta chains form an alternating ring which encloses part of the gamma chain. CF(1) is attached to CF(0) by a central stalk formed by the gamma and epsilon chains, while a peripheral stalk is formed by the delta and b chains.

Its subcellular location is the cell inner membrane. It catalyses the reaction ATP + H2O + 4 H(+)(in) = ADP + phosphate + 5 H(+)(out). Produces ATP from ADP in the presence of a proton gradient across the membrane. The alpha chain is a regulatory subunit. This chain is ATP synthase subunit alpha, found in Actinobacillus succinogenes (strain ATCC 55618 / DSM 22257 / CCUG 43843 / 130Z).